The chain runs to 681 residues: Chaperone protein htpG (681 aa).

The tract at residues 1-326 is a; substrate-binding; sequence MQKGNIGVTT…SPDIPLNVSR (326 aa). A b region spans residues 327 to 545; it reads SYLQSDSNVK…YMRRMKEMAN (219 aa). The segment at 546–681 is c; the sequence is IQAGMSFYGE…NFVKRSIELI (136 aa). Positions 601-620 are disordered; the sequence is DALKKKQEGKKDEDIPTAEK.

Belongs to the heat shock protein 90 family. Homodimer.

It localises to the cytoplasm. In terms of biological role, molecular chaperone. Has ATPase activity. This chain is Chaperone protein htpG, found in Bacteroides fragilis (strain 638R).